Here is a 369-residue protein sequence, read N- to C-terminus: Septin-5 (369 aa).

Thr-13 carries the phosphothreonine modification. Positions 41-314 (KGFDFTLMVA…ENYRAHCIQQ (274 aa)) constitute a Septin-type G domain. A G1 motif region spans residues 51–58 (GESGLGKS). GTP contacts are provided by residues 51 to 58 (GESGLGKS), Thr-85, and Gly-111. Residues 108–111 (DTPG) are G3 motif. Arg-168 is subject to Omega-N-methylarginine. A G4 motif region spans residues 189 to 192 (AKAD). 190 to 198 (KADCLVPSE) contacts GTP. Ser-225 carries the post-translational modification Phosphoserine. Positions 248 and 263 each coordinate GTP. Phosphoserine is present on Ser-327. The residue at position 336 (Thr-336) is a Phosphothreonine. A coiled-coil region spans residues 338–369 (DAETEKLIRMKDEELRRMQEMLQKMKQQMQDQ).

It belongs to the TRAFAC class TrmE-Era-EngA-EngB-Septin-like GTPase superfamily. Septin GTPase family. As to quaternary structure, septins polymerize into heterooligomeric protein complexes that form filaments, and can associate with cellular membranes, actin filaments and microtubules. GTPase activity is required for filament formation. Interacts with SEPTIN2 and SEPTIN5. Interaction with SEPTIN4 not detected. In platelets, associated with a complex containing STX4. Interacts with PRKN; this interaction leads to SEPTIN5 ubiquitination and degradation. Interacts with DYRK1A. Interacts with STX1A; in the cerebellar cortex. Post-translationally, phosphorylated by DYRK1A.

The protein localises to the cytoplasm. The protein resides in the cytoskeleton. In terms of biological role, filament-forming cytoskeletal GTPase. Involved in cytokinesis (Potential). May play a role in platelet secretion. In Mus musculus (Mouse), this protein is Septin-5.